The following is a 344-amino-acid chain: Oxygen sensor histidine kinase NreB (344 aa).

4 residues coordinate [4Fe-4S] cluster: Cys-58, Cys-61, Cys-73, and Cys-76. A Histidine kinase domain is found at Glu-147–Ile-344. His-158 bears the Phosphohistidine; by autocatalysis mark.

It depends on [4Fe-4S] cluster as a cofactor. Post-translationally, autophosphorylated.

It is found in the cytoplasm. It catalyses the reaction ATP + protein L-histidine = ADP + protein N-phospho-L-histidine.. In terms of biological role, member of the two-component regulatory system NreB/NreC involved in the control of dissimilatory nitrate/nitrite reduction in response to oxygen. NreB functions as a direct oxygen sensor histidine kinase which is autophosphorylated, in the absence of oxygen, probably at the conserved histidine residue, and transfers its phosphate group probably to a conserved aspartate residue of NreC. NreB/NreC activates the expression of the nitrate (narGHJI) and nitrite (nir) reductase operons, as well as the putative nitrate transporter gene narT. The sequence is that of Oxygen sensor histidine kinase NreB (nreB) from Staphylococcus epidermidis (strain ATCC 12228 / FDA PCI 1200).